We begin with the raw amino-acid sequence, 460 residues long: Orexin receptor type 2 (460 aa).

Topologically, residues M1–E54 are extracellular. N14 and N22 each carry an N-linked (GlcNAc...) asparagine glycan. Positions D33–H49 are required for response to orexin-A. The helical transmembrane segment at W55 to V75 threads the bilayer. At C76–V88 the chain is on the cytoplasmic side. The chain crosses the membrane as a helical span at residues T89–A110. The Extracellular portion of the chain corresponds to T111 to C127. C127 and C210 are joined by a disulfide. The chain crosses the membrane as a helical span at residues K128–L150. Over D151 to R170 the chain is Cytoplasmic. A helical membrane pass occupies residues N171–M191. Residues E192–M222 lie on the Extracellular side of the membrane. An N-linked (GlcNAc...) asparagine glycan is attached at N202. The helical transmembrane segment at Y223–Y243 threads the bilayer. At L244–R304 the chain is on the cytoplasmic side. Residues M305 to L326 form a helical membrane-spanning segment. At K327–V342 the chain is on the extracellular side. A helical transmembrane segment spans residues Y343 to F366. Residues L367 to V460 lie on the Cytoplasmic side of the membrane.

It belongs to the G-protein coupled receptor 1 family. As to expression, expressed in the brain in the cerebral cortex, septal nuclei, hippocampus, medial thalamic groups, dorsal and median raphe nuclei, and many hypothalamic nuclei including the tuberomammillary nucleus, dorsomedial hypothalamus, paraventricular hypothalamic nucleus, and ventral premammillary nucleus. Not detected in the spleen, lung, liver, skeletal muscle, kidney and testis. Orexin receptor mRNA expression has also been reported in the adrenal gland, enteric nervous system, and pancreas.

The protein resides in the cell membrane. Its function is as follows. Nonselective, high-affinity receptor for both orexin-A and orexin-B neuropeptides. Triggers an increase in cytoplasmic Ca(2+) levels in response to orexin-A binding. The protein is Orexin receptor type 2 (Hcrtr2) of Rattus norvegicus (Rat).